The sequence spans 175 residues: UPF0178 protein GOX1710 (175 aa).

Belongs to the UPF0178 family.

The chain is UPF0178 protein GOX1710 from Gluconobacter oxydans (strain 621H) (Gluconobacter suboxydans).